Reading from the N-terminus, the 778-residue chain is Dapper homolog 1 (778 aa).

2 stretches are compositionally biased toward basic and acidic residues: residues 1 to 10 (MKPDAAREPE) and 18 to 40 (AEAEGRWRERGEADTERQRTRER). The interval 1 to 40 (MKPDAAREPEPLSPGRGAEAEGRWRERGEADTERQRTRER) is disordered. The tract at residues 85 to 149 (DAAQRSRLEE…SEEHLETDSR (65 aa)) is required for self-association. Positions 85-149 (DAAQRSRLEE…SEEHLETDSR (65 aa)) form a coiled coil. The Nuclear export signal signature appears at 125 to 134 (LDKQISDLRL). 6 disordered regions span residues 305–324 (KTHPVRTNKPRTSVNADPTK), 359–386 (GGITSLENGPFSPPKQRSKDSKTDQLES), 397–416 (AGAAMEPQSKHVPKAAKAAS), 428–468 (ESMK…SQKN), 544–616 (EKPR…HKRT), and 694–721 (NCFGDSESSVSEGDFVGESTTTSDSEES). Positions 375-386 (RSKDSKTDQLES) are enriched in basic and acidic residues. The span at 432–443 (ESNQASAVSPKT) shows a compositional bias: polar residues. A Bipartite nuclear localization signal motif is present at residues 551 to 564 (KKCRFPDDSDTNKK). The span at 554-563 (RFPDDSDTNK) shows a compositional bias: basic and acidic residues. Positions 564–574 (KFRKTSAKGRR) are enriched in basic residues. The span at 694–704 (NCFGDSESSVS) shows a compositional bias: polar residues. A PDZ-binding motif is present at residues 768–778 (RSGSLKLMTTV). Ser769 carries the post-translational modification Phosphoserine; by PKA.

The protein belongs to the dapper family. Can form homodimers and heterodimers with DACT2 or DACT3. Interacts with CSNK1D, PKA catalytic subunit, PKC-type kinase, CSNK2A1, CSNK2B, DVL1, DLV2, DVAL3, VANGL1, VANGL2, CTNND1 and HDAC1. Interacts with GSK3B; the interaction is indicative for an association of DACT1 with the beta-catenin destruction complex. Interacts with GSK3A. Interacts with YWHAB; the interaction is enhanced by PKA phosphorylating DACT1 at Ser-769. Interacts with CTNNB1. As to expression, expressed in multiple tissues including brain, heart, kidney, liver and testis.

Its subcellular location is the cytoplasm. It localises to the nucleus. It is found in the synapse. Involved in regulation of intracellular signaling pathways during development. Specifically thought to play a role in canonical and/or non-canonical Wnt signaling pathways through interaction with DSH (Dishevelled) family proteins. The activation/inhibition of Wnt signaling may depend on the phosphorylation status. Proposed to regulate the degradation of CTNNB1/beta-catenin, thereby modulating the transcriptional activation of target genes of the Wnt signaling pathway. Its function in stabilizing CTNNB1 may involve inhibition of GSK3B activity. Promotes the membrane localization of CTNNB1. The cytoplasmic form can induce DVL2 degradation via a lysosome-dependent mechanism; the function is inhibited by PKA-induced binding to 14-3-3 proteins, such as YWHAB. Seems to be involved in morphogenesis at the primitive streak by regulating VANGL2 and DVL2; the function seems to be independent of canonical Wnt signaling and rather involves the non-canonical Wnt/planar cell polarity (PCP) pathway. The nuclear form may prevent the formation of LEF1:CTNNB1 complex and recruit HDAC1 to LEF1 at target gene promoters to repress transcription thus antagonizing Wnt signaling. May be involved in positive regulation of fat cell differentiation. During neuronal differentiation may be involved in excitatory synapse organization, and dendrite formation and establishment of spines. This chain is Dapper homolog 1 (Dact1), found in Mus musculus (Mouse).